We begin with the raw amino-acid sequence, 110 residues long: UPF0060 membrane protein Bcen_0802 (110 aa).

Helical transmembrane passes span 9-29 (ALFA…WLVL), 34-54 (PAWL…LLTL), 66-86 (YGGV…GVAL), and 88-108 (RWDV…ALQP).

Belongs to the UPF0060 family.

It localises to the cell inner membrane. The chain is UPF0060 membrane protein Bcen_0802 from Burkholderia orbicola (strain AU 1054).